Here is a 161-residue protein sequence, read N- to C-terminus: Nucleotide-binding protein Mmwyl1_2033 (161 aa).

This sequence belongs to the YajQ family.

Nucleotide-binding protein. This Marinomonas sp. (strain MWYL1) protein is Nucleotide-binding protein Mmwyl1_2033.